Consider the following 146-residue polypeptide: Hemoglobin subunit beta (146 aa).

An N-acetylvaline modification is found at Val-1. Positions 2–146 (HLTGEEKAAV…VANALAHKYH (145 aa)) constitute a Globin domain. Thr-12 is subject to Phosphothreonine. Residue Ser-44 is modified to Phosphoserine. Lys-59 bears the N6-acetyllysine mark. A heme b-binding site is contributed by His-63. N6-acetyllysine is present on Lys-82. His-92 lines the heme b pocket. Cys-93 carries the post-translational modification S-nitrosocysteine. N6-acetyllysine is present on Lys-144.

The protein belongs to the globin family. In terms of assembly, heterotetramer of two alpha chains and two beta chains. Red blood cells.

Involved in oxygen transport from the lung to the various peripheral tissues. This chain is Hemoglobin subunit beta (HBB), found in Martes foina (Beech marten).